The sequence spans 106 residues: Large ribosomal subunit protein uL23 (106 aa).

The protein belongs to the universal ribosomal protein uL23 family. Part of the 50S ribosomal subunit. Contacts protein L29, and trigger factor when it is bound to the ribosome.

In terms of biological role, one of the early assembly proteins it binds 23S rRNA. One of the proteins that surrounds the polypeptide exit tunnel on the outside of the ribosome. Forms the main docking site for trigger factor binding to the ribosome. This is Large ribosomal subunit protein uL23 from Neisseria meningitidis serogroup C / serotype 2a (strain ATCC 700532 / DSM 15464 / FAM18).